Reading from the N-terminus, the 141-residue chain is Hemoglobin subunit alpha-A (141 aa).

One can recognise a Globin domain in the interval 1–141 (VLSAADKNNV…VGNVLTAKYR (141 aa)). Histidine 58 provides a ligand contact to O2. A heme b-binding site is contributed by histidine 87.

It belongs to the globin family. Heterotetramer of two alpha chains and two beta chains. In terms of tissue distribution, red blood cells.

In terms of biological role, involved in oxygen transport from the lung to the various peripheral tissues. The protein is Hemoglobin subunit alpha-A (HBAA) of Francolinus pondicerianus (Grey francolin).